Consider the following 351-residue polypeptide: MLPSLQSLTKKVLAGQCLPEDQHYLLKCYDLWWNNAPITFDHNLRLIKSAGLQEGLDLNMALVKAVKENNYSLIKLFTEWGANINYGLISVNTEHTWDLCRELGAKKTLNEGDILQIFIDLKFHKTSSNIILCHEVFSDNLLLKKVNNLKMRIEIFWELREIIEKTDLLNNEFSLNTLLLKYWYAIAVRYNLKEAIQYFYQKYTHLNTWRLTCALCFNNVFDLHEAYEKDKICMDLEEMMRIACIKDHSLSTIYYCYMLGANINQAMLTSIQYYNIENIFFCMDLGADAFEEGMALVGQEGYEPIRNILSLKIYSPATTPLPKSTDPEIIDHELKNYFSKNMMVFLTYDLR.

An ANK repeat occupies 57-89 (DLNMALVKAVKENNYSLIKLFTEWGANINYGLI).

It belongs to the asfivirus MGF 360 family.

Functionally, plays a role in virus cell tropism, and may be required for efficient virus replication in macrophages. The protein is Protein MGF 360-12L of Ornithodoros (relapsing fever ticks).